Here is a 354-residue protein sequence, read N- to C-terminus: ATPase GET3 (354 aa).

26–33 (KGGVGKTT) serves as a coordination point for ATP. Residue aspartate 57 is part of the active site. ATP-binding residues include glutamate 245 and asparagine 272. Positions 285 and 288 each coordinate Zn(2+).

The protein belongs to the arsA ATPase family. In terms of assembly, homodimer. Component of the Golgi to ER traffic (GET) complex, which is composed of GET1, GET2 and GET3. Within the complex, GET1 and GET2 form a heterotetramer which is stabilized by phosphatidylinositol binding and which binds to the GET3 homodimer. Interacts with the chloride channel protein GEF1.

The protein resides in the cytoplasm. Its subcellular location is the endoplasmic reticulum. It is found in the golgi apparatus. Functionally, ATPase required for the post-translational delivery of tail-anchored (TA) proteins to the endoplasmic reticulum. Recognizes and selectively binds the transmembrane domain of TA proteins in the cytosol. This complex then targets to the endoplasmic reticulum by membrane-bound receptors GET1 and GET2, where the tail-anchored protein is released for insertion. This process is regulated by ATP binding and hydrolysis. ATP binding drives the homodimer towards the closed dimer state, facilitating recognition of newly synthesized TA membrane proteins. ATP hydrolysis is required for insertion. Subsequently, the homodimer reverts towards the open dimer state, lowering its affinity for the GET1-GET2 receptor, and returning it to the cytosol to initiate a new round of targeting. Cooperates with the HDEL receptor ERD2 to mediate the ATP-dependent retrieval of resident ER proteins that contain a C-terminal H-D-E-L retention signal from the Golgi to the ER. Involved in low-level resistance to the oxyanions arsenite and arsenate, and in heat tolerance. The polypeptide is ATPase GET3 (Saccharomyces cerevisiae (strain RM11-1a) (Baker's yeast)).